We begin with the raw amino-acid sequence, 747 residues long: Major facilitator superfamily domain-containing protein 6-B (747 aa).

11 consecutive transmembrane segments (helical) span residues Leu-15–Gln-35, Lys-75–Val-95, Thr-222–Val-242, Trp-271–Ile-291, Ile-306–His-326, Val-391–Trp-411, Thr-420–Ile-440, Val-453–Tyr-470, Gly-485–Leu-507, Leu-520–Ala-540, and Gly-546–Gly-566. Composition is skewed to polar residues over residues Asn-597–Asp-606 and Asn-652–Ala-668. Disordered stretches follow at residues Asn-597–Ala-625 and Asn-652–His-747. Residues Ser-675–Ser-685 show a composition bias toward low complexity.

It belongs to the major facilitator superfamily. MFSD6 family.

The protein resides in the membrane. In Danio rerio (Zebrafish), this protein is Major facilitator superfamily domain-containing protein 6-B (mfsd6b).